Here is a 345-residue protein sequence, read N- to C-terminus: MAYRFQGFLYGILFLAFFSLLSLFISATLTPFLSPLIIGILLGAALSPFYPKLNQHYDIQAGITFGAKKLLRLGIILYGSYITLGEIATLGLNGFLISLFIVAGVFIAAIFIGKMLKLDNEISLLVGIGSAVCGAAAILALESTLKTHPSKSSVALGFIVIFGLIGMILLPAIYYANILPLNDYQWGIFIGASLHEVANVVGAAAISPESQNVAIIVKMTRVVLLVPLLLIISYIIFKLNQKRVQNDTNIPNGDTHAKQNALYIPYFAFGFLGVIVLNSFIDFPPVVVESTQFASKICLVFAMVALGLQIDWQKFISFGAKTFALALILFIILMFGTYGLVYIMF.

The next 10 helical transmembrane spans lie at 7 to 29, 33 to 50, 90 to 112, 122 to 141, 154 to 176, 186 to 208, 215 to 237, 262 to 281, 293 to 312, and 322 to 344; these read GFLY…SATL, LSPL…SPFY, LGLN…AIFI, ISLL…ILAL, VALG…IYYA, WGIF…AISP, IIVK…YIIF, LYIP…NSFI, FASK…QIDW, and TFAL…VYIM.

Belongs to the UPF0324 family.

Its subcellular location is the cell membrane. This is UPF0324 membrane protein HH_1161 from Helicobacter hepaticus (strain ATCC 51449 / 3B1).